The following is a 302-amino-acid chain: Acidic endochitinase (302 aa).

Positions 1–30 (MTNMTLRKHVIYFLFFISCSLSKPSDASRG) are cleaved as a signal peptide. The GH18 domain occupies 31–302 (GIAIYWGQNG…GYSSSILASV (272 aa)). 2 disulfide bridges follow: cysteine 49-cysteine 96 and cysteine 79-cysteine 86. Glutamate 156 functions as the Proton donor in the catalytic mechanism. Cysteine 188 and cysteine 217 are joined by a disulfide.

This sequence belongs to the glycosyl hydrolase 18 family. Chitinase class III subfamily.

The protein resides in the secreted. It is found in the extracellular space. The enzyme catalyses Random endo-hydrolysis of N-acetyl-beta-D-glucosaminide (1-&gt;4)-beta-linkages in chitin and chitodextrins.. In terms of biological role, this protein functions as a defense against chitin containing fungal pathogens. In Arabidopsis thaliana (Mouse-ear cress), this protein is Acidic endochitinase (CHIB1).